Consider the following 418-residue polypeptide: UDP-N-acetylglucosamine 1-carboxyvinyltransferase (418 aa).

22–23 (KN) provides a ligand contact to phosphoenolpyruvate. A UDP-N-acetyl-alpha-D-glucosamine-binding site is contributed by Arg-92. Cys-116 functions as the Proton donor in the catalytic mechanism. A 2-(S-cysteinyl)pyruvic acid O-phosphothioketal modification is found at Cys-116. Positions 306 and 328 each coordinate UDP-N-acetyl-alpha-D-glucosamine.

Belongs to the EPSP synthase family. MurA subfamily.

The protein resides in the cytoplasm. The enzyme catalyses phosphoenolpyruvate + UDP-N-acetyl-alpha-D-glucosamine = UDP-N-acetyl-3-O-(1-carboxyvinyl)-alpha-D-glucosamine + phosphate. It functions in the pathway cell wall biogenesis; peptidoglycan biosynthesis. In terms of biological role, cell wall formation. Adds enolpyruvyl to UDP-N-acetylglucosamine. This chain is UDP-N-acetylglucosamine 1-carboxyvinyltransferase, found in Solibacter usitatus (strain Ellin6076).